The following is a 74-amino-acid chain: Large ribosomal subunit protein bL31 (74 aa).

It belongs to the bacterial ribosomal protein bL31 family. Type A subfamily. As to quaternary structure, part of the 50S ribosomal subunit.

Its function is as follows. Binds the 23S rRNA. The chain is Large ribosomal subunit protein bL31 from Synechococcus sp. (strain JA-2-3B'a(2-13)) (Cyanobacteria bacterium Yellowstone B-Prime).